Here is a 112-residue protein sequence, read N- to C-terminus: Putative UPF0320 protein YEL074W (112 aa).

The tract at residues 93–112 is disordered; sequence EKSPSKSPKHKNILPFNFTK.

It belongs to the UPF0320 family.

The sequence is that of Putative UPF0320 protein YEL074W from Saccharomyces cerevisiae (strain ATCC 204508 / S288c) (Baker's yeast).